The sequence spans 541 residues: Acyl-CoA ligase M9 (541 aa).

186–197 (AMSTSGTTGLPK) provides a ligand contact to AMP. The tract at residues 445–519 (ELEAVLHQMP…DSLPRNSSGK (75 aa)) is AMP-binding.

This sequence belongs to the ATP-dependent AMP-binding enzyme family.

It functions in the pathway secondary metabolite biosynthesis. Acyl-CoA ligase; part of the gene cluster that mediates the biosynthesis of squalestatin S1 (SQS1, also known as zaragozic acid A), a heavily oxidized fungal polyketide that offers potent cholesterol lowering activity by targeting squalene synthase (SS). SQS1 is composed of a 2,8-dioxobicyclic[3.2.1]octane-3,4,5-tricarboxyclic acid core that is connected to two lipophilic polyketide arms. These initial steps feature the priming of an unusual benzoic acid starter unit onto the highly reducing polyketide synthase pks2, followed by oxaloacetate extension and product release to generate a tricarboxylic acid containing product. The phenylalanine ammonia lyase (PAL) M7 and the acyl-CoA ligase M9 are involved in transforming phenylalanine into benzoyl-CoA. The citrate synthase-like protein R3 is involved in connecting the C-alpha-carbons of the hexaketide chain and oxaloacetate to afford the tricarboxylic acid unit. The potential hydrolytic enzymes, M8 and M10, are in close proximity to pks2 and may participate in product release. On the other side, the tetraketide arm is synthesized by a the squalestatin tetraketide synthase pks1 and enzymatically esterified to the core in the last biosynthetic step, by the acetyltransferase M4. The biosynthesis of the tetraketide must involve 3 rounds of chain extension. After the first and second rounds methyl-transfer occurs, and in all rounds of extension the ketoreductase and dehydratase are active. The enoyl reductase and C-MeT of pks1 are not active in the final round of extension. The acetyltransferase M4 appears to have a broad substrate selectivity for its acyl CoA substrate, allowing the in vitro synthesis of novel squalestatins. The biosynthesis of SQS1 requires several oxidative steps likely performed by oxidoreductases M1, R1 and R2. Finally, in support of the identification of the cluster as being responsible for SQS1 production, the cluster contains a gene encoding a putative squalene synthase (SS) R6, suggesting a likely mechanism for self-resistance. The sequence is that of Acyl-CoA ligase M9 from Phoma sp. (strain ATCC 20986 / MF5453).